The primary structure comprises 113 residues: Large ribosomal subunit protein uL22 (113 aa).

The protein belongs to the universal ribosomal protein uL22 family. As to quaternary structure, part of the 50S ribosomal subunit.

In terms of biological role, this protein binds specifically to 23S rRNA; its binding is stimulated by other ribosomal proteins, e.g. L4, L17, and L20. It is important during the early stages of 50S assembly. It makes multiple contacts with different domains of the 23S rRNA in the assembled 50S subunit and ribosome. Functionally, the globular domain of the protein is located near the polypeptide exit tunnel on the outside of the subunit, while an extended beta-hairpin is found that lines the wall of the exit tunnel in the center of the 70S ribosome. The chain is Large ribosomal subunit protein uL22 from Thermus thermophilus (strain ATCC BAA-163 / DSM 7039 / HB27).